The primary structure comprises 109 residues: Spermidine export protein MdtI (109 aa).

4 helical membrane passes run 6–26 (LQHI…NIWL), 36–56 (VYGV…GQAV), 64–84 (AYAL…WIMF), and 88–108 (LNRK…IIKL).

This sequence belongs to the drug/metabolite transporter (DMT) superfamily. Small multidrug resistance (SMR) (TC 2.A.7.1) family. MdtI subfamily. Forms a complex with MdtJ.

It is found in the cell inner membrane. In terms of biological role, catalyzes the excretion of spermidine. The sequence is that of Spermidine export protein MdtI (mdtI) from Cronobacter sakazakii (strain ATCC BAA-894) (Enterobacter sakazakii).